The sequence spans 500 residues: Maturase K (500 aa).

The protein belongs to the intron maturase 2 family. MatK subfamily.

The protein localises to the plastid. Its subcellular location is the chloroplast. Its function is as follows. Usually encoded in the trnK tRNA gene intron. Probably assists in splicing its own and other chloroplast group II introns. The sequence is that of Maturase K from Helianthus annuus (Common sunflower).